Reading from the N-terminus, the 555-residue chain is Glutamine--tRNA ligase (555 aa).

A 'HIGH' region motif is present at residues 34 to 44 (PEPNGYLHIGH). Residues 35–37 (EPN) and 41–47 (HIGHAKS) contribute to the ATP site. L-glutamine contacts are provided by aspartate 67 and tyrosine 212. Residues threonine 231, 261–262 (RL), and 269–271 (MSK) contribute to the ATP site. A 'KMSKS' region motif is present at residues 268–272 (VMSKR). Residues 317–324 (TKQDNTIE) are interaction with tRNA.

Belongs to the class-I aminoacyl-tRNA synthetase family. In terms of assembly, monomer.

Its subcellular location is the cytoplasm. It catalyses the reaction tRNA(Gln) + L-glutamine + ATP = L-glutaminyl-tRNA(Gln) + AMP + diphosphate. This is Glutamine--tRNA ligase from Enterobacter sp. (strain 638).